A 538-amino-acid polypeptide reads, in one-letter code: MEIKEISVPLQGVVGDYIKSDNKIQTCFDYALTEAGFKQRLYDLRNRKFFRQELVEHLLEYNKQLQAGQSTIQNIEALADENTYVVIGGQQAGLLTGPLYTVHKVISIVQLAKEKEASLGTRVVPVFWIAGEDHDVDEINHTFVTKNKKIKKMIFHDRHSKKTSASESEISIEDCSKWIEEIFKTYPETNFTKDVLQFIQEALEESSTYVDFFARLITKLFADTGLILVDSHHPNLRKLEVSFFKRIISQYKEVQEALHNQQQIVKEYGYKPIIETKQNAIHVFMQIDEERVLLEEENGKFVGKSGIYSFSYEELIEEMEQSPERFSNNVVTRPLMQEYLFPTVAFIGGPGEIAYWSELQQVFHVFDFQMPPVVPRLTISYMERDIITDLYDLNLQEEDPFVKDLDKLREKWLSNQVEEPVEEKFQEAKKNMMDIHSSLQQFVNRIDPGLKEFAGKNERKIQEQIELLERMLKQNLERRHEVELNKFRRLQYALRPLGAPQERVWNVCYYLNQYGLDFVERVTKQSYSWNGTHHVIKL.

Positions 421-485 (VEEKFQEAKK…LERRHEVELN (65 aa)) form a coiled coil.

This sequence belongs to the BshC family.

In terms of biological role, involved in bacillithiol (BSH) biosynthesis. May catalyze the last step of the pathway, the addition of cysteine to glucosamine malate (GlcN-Mal) to generate BSH. The sequence is that of Putative cysteine ligase BshC from Bacillus cytotoxicus (strain DSM 22905 / CIP 110041 / 391-98 / NVH 391-98).